We begin with the raw amino-acid sequence, 377 residues long: Succinyl-diaminopimelate desuccinylase (377 aa).

Histidine 67 contacts Zn(2+). The active site involves aspartate 69. Aspartate 100 contacts Zn(2+). Glutamate 134 serves as the catalytic Proton acceptor. Zn(2+) is bound by residues glutamate 135, glutamate 163, and histidine 349.

The protein belongs to the peptidase M20A family. DapE subfamily. Homodimer. Zn(2+) serves as cofactor. Co(2+) is required as a cofactor.

It catalyses the reaction N-succinyl-(2S,6S)-2,6-diaminopimelate + H2O = (2S,6S)-2,6-diaminopimelate + succinate. It participates in amino-acid biosynthesis; L-lysine biosynthesis via DAP pathway; LL-2,6-diaminopimelate from (S)-tetrahydrodipicolinate (succinylase route): step 3/3. Functionally, catalyzes the hydrolysis of N-succinyl-L,L-diaminopimelic acid (SDAP), forming succinate and LL-2,6-diaminopimelate (DAP), an intermediate involved in the bacterial biosynthesis of lysine and meso-diaminopimelic acid, an essential component of bacterial cell walls. This is Succinyl-diaminopimelate desuccinylase from Shewanella frigidimarina (strain NCIMB 400).